A 358-amino-acid chain; its full sequence is Neutral protease 2 homolog MEP8 (358 aa).

The signal sequence occupies residues 1–19 (MKLSSILLALAALVSPAFS). A propeptide spanning residues 20–179 (YAISHLPRSE…EKAIKPVDKR (160 aa)) is cleaved from the precursor. Cystine bridges form between Cys-186–Cys-256 and Cys-263–Cys-281. Residue His-305 coordinates Zn(2+). Glu-306 is an active-site residue. The Zn(2+) site is built by His-309 and Asp-320.

The protein belongs to the peptidase M35 family. It depends on Zn(2+) as a cofactor.

Its subcellular location is the secreted. The enzyme catalyses Preferential cleavage of bonds with hydrophobic residues in P1'. Also 3-Asn-|-Gln-4 and 8-Gly-|-Ser-9 bonds in insulin B chain.. In terms of biological role, secreted metalloproteinase that allows assimilation of proteinaceous substrates. Shows high activities on basic nuclear substrates such as histone and protamine. May be involved in virulence. This chain is Neutral protease 2 homolog MEP8 (MEP8), found in Coccidioides posadasii (strain C735) (Valley fever fungus).